The following is an 876-amino-acid chain: Leucine--tRNA ligase (876 aa).

The 'HIGH' region signature appears at 43–53 (PYPSGRIHMGH). The 'KMSKS' region motif lies at 632–636 (KMSKS). Lys635 contributes to the ATP binding site.

This sequence belongs to the class-I aminoacyl-tRNA synthetase family.

Its subcellular location is the cytoplasm. The enzyme catalyses tRNA(Leu) + L-leucine + ATP = L-leucyl-tRNA(Leu) + AMP + diphosphate. The polypeptide is Leucine--tRNA ligase (Rhodopseudomonas palustris (strain ATCC BAA-98 / CGA009)).